The following is a 665-amino-acid chain: Translation factor guf1, mitochondrial (665 aa).

Residues 1–40 constitute a mitochondrion transit peptide; the sequence is MRGCLQLARWLSAAPTRPAASHWPGLCAAPRFFSHSAILR. One can recognise a tr-type G domain in the interval 67 to 247; the sequence is ERYRNFCIVA…TVVDKIPAPI (181 aa). GTP is bound by residues 76 to 83, 140 to 144, and 194 to 197; these read AHVDHGKS, DTPGH, and NKVD.

This sequence belongs to the TRAFAC class translation factor GTPase superfamily. Classic translation factor GTPase family. LepA subfamily.

The protein resides in the mitochondrion inner membrane. The catalysed reaction is GTP + H2O = GDP + phosphate + H(+). Promotes mitochondrial protein synthesis. May act as a fidelity factor of the translation reaction, by catalyzing a one-codon backward translocation of tRNAs on improperly translocated ribosomes. Binds to mitochondrial ribosomes in a GTP-dependent manner. The chain is Translation factor guf1, mitochondrial (guf1) from Aspergillus terreus (strain NIH 2624 / FGSC A1156).